A 172-amino-acid chain; its full sequence is Adenine phosphoribosyltransferase (172 aa).

Belongs to the purine/pyrimidine phosphoribosyltransferase family. In terms of assembly, homodimer.

The protein localises to the cytoplasm. It catalyses the reaction AMP + diphosphate = 5-phospho-alpha-D-ribose 1-diphosphate + adenine. It participates in purine metabolism; AMP biosynthesis via salvage pathway; AMP from adenine: step 1/1. Functionally, catalyzes a salvage reaction resulting in the formation of AMP, that is energically less costly than de novo synthesis. The sequence is that of Adenine phosphoribosyltransferase from Synechocystis sp. (strain ATCC 27184 / PCC 6803 / Kazusa).